Reading from the N-terminus, the 165-residue chain is Putative 1,2-phenylacetyl-CoA epoxidase, subunit D (165 aa).

In terms of assembly, monomer.

Its pathway is aromatic compound metabolism; phenylacetate degradation. In terms of biological role, possible component of 1,2-phenylacetyl-CoA epoxidase multicomponent enzyme system which catalyzes the reduction of phenylacetyl-CoA (PA-CoA) to form 1,2-epoxyphenylacetyl-CoA. The subunit D may have a function related to the maturation of the monooxygenase complex, rather than direct involvement in catalysis. PaaD could assist either in maturation of PaaE or PaaA. This is Putative 1,2-phenylacetyl-CoA epoxidase, subunit D (paaD) from Escherichia coli (strain K12).